A 218-amino-acid chain; its full sequence is Redox-sensing transcriptional repressor Rex (218 aa).

Residues 25–64 (WYLSYVQLLHADGCESVSSTRIARAVGVDASLVAKDLSYV) constitute a DNA-binding region (H-T-H motif). Residue 99–104 (GVGSLG) participates in NAD(+) binding.

It belongs to the transcriptional regulatory Rex family. Homodimer.

It localises to the cytoplasm. Its function is as follows. Modulates transcription in response to changes in cellular NADH/NAD(+) redox state. This is Redox-sensing transcriptional repressor Rex from Porphyromonas gingivalis (strain ATCC 33277 / DSM 20709 / CIP 103683 / JCM 12257 / NCTC 11834 / 2561).